The primary structure comprises 44 residues: Thymosin beta-12 (44 aa).

Composition is skewed to basic and acidic residues over residues 1 to 25 and 33 to 44; these read MSDK…ETQE and ETIEQEKAAATS. Residues 1-44 are disordered; the sequence is MSDKPDISEVTSFDKTKLKKTETQEKNPLPSKETIEQEKAAATS. N-acetylserine is present on S2.

Belongs to the thymosin beta family.

The protein localises to the cytoplasm. It is found in the cytoskeleton. Its function is as follows. Plays an important role in the organization of the cytoskeleton. Binds to and sequesters actin monomers (G actin) and therefore inhibits actin polymerization. This chain is Thymosin beta-12, found in Lateolabrax japonicus (Japanese sea perch).